The following is a 214-amino-acid chain: Octanoyltransferase (214 aa).

The BPL/LPL catalytic domain maps to glycine 34–asparagine 214. Substrate is bound by residues arginine 73–histidine 80, alanine 145–glycine 147, and glycine 158–serine 160. Residue cysteine 176 is the Acyl-thioester intermediate of the active site.

It belongs to the LipB family.

It is found in the cytoplasm. The enzyme catalyses octanoyl-[ACP] + L-lysyl-[protein] = N(6)-octanoyl-L-lysyl-[protein] + holo-[ACP] + H(+). It functions in the pathway protein modification; protein lipoylation via endogenous pathway; protein N(6)-(lipoyl)lysine from octanoyl-[acyl-carrier-protein]: step 1/2. Functionally, catalyzes the transfer of endogenously produced octanoic acid from octanoyl-acyl-carrier-protein onto the lipoyl domains of lipoate-dependent enzymes. Lipoyl-ACP can also act as a substrate although octanoyl-ACP is likely to be the physiological substrate. This chain is Octanoyltransferase, found in Ehrlichia chaffeensis (strain ATCC CRL-10679 / Arkansas).